The primary structure comprises 193 residues: Potassium-transporting ATPase KdpC subunit (193 aa).

The helical transmembrane segment at 11–31 (FTLVFMVLLGLVYPFVMTGIA) threads the bilayer.

It belongs to the KdpC family. The system is composed of three essential subunits: KdpA, KdpB and KdpC.

The protein resides in the cell membrane. Functionally, part of the high-affinity ATP-driven potassium transport (or Kdp) system, which catalyzes the hydrolysis of ATP coupled with the electrogenic transport of potassium into the cytoplasm. This subunit acts as a catalytic chaperone that increases the ATP-binding affinity of the ATP-hydrolyzing subunit KdpB by the formation of a transient KdpB/KdpC/ATP ternary complex. The protein is Potassium-transporting ATPase KdpC subunit of Caldanaerobacter subterraneus subsp. tengcongensis (strain DSM 15242 / JCM 11007 / NBRC 100824 / MB4) (Thermoanaerobacter tengcongensis).